The chain runs to 357 residues: GTPase Obg (357 aa).

The Obg domain occupies 1–158 (MFVDNIKLKV…LEIVLELKLI (158 aa)). Residues 159-345 (ADVGLVGFPN…LKFALFDLVE (187 aa)) form the OBG-type G domain. Residues 165–172 (GFPNAGKS), 190–194 (FTTLT), 212–215 (DIPG), 280–283 (TKCD), and 326–328 (SSV) contribute to the GTP site. Residues Ser-172 and Thr-192 each coordinate Mg(2+).

Belongs to the TRAFAC class OBG-HflX-like GTPase superfamily. OBG GTPase family. Monomer. Mg(2+) is required as a cofactor.

It is found in the cytoplasm. Its function is as follows. An essential GTPase which binds GTP, GDP and possibly (p)ppGpp with moderate affinity, with high nucleotide exchange rates and a fairly low GTP hydrolysis rate. Plays a role in control of the cell cycle, stress response, ribosome biogenesis and in those bacteria that undergo differentiation, in morphogenesis control. The protein is GTPase Obg of Nautilia profundicola (strain ATCC BAA-1463 / DSM 18972 / AmH).